Reading from the N-terminus, the 312-residue chain is Methionyl-tRNA formyltransferase (312 aa).

117 to 120 contacts (6S)-5,6,7,8-tetrahydrofolate; that stretch reads SLLP.

The protein belongs to the Fmt family.

The catalysed reaction is L-methionyl-tRNA(fMet) + (6R)-10-formyltetrahydrofolate = N-formyl-L-methionyl-tRNA(fMet) + (6S)-5,6,7,8-tetrahydrofolate + H(+). Its function is as follows. Attaches a formyl group to the free amino group of methionyl-tRNA(fMet). The formyl group appears to play a dual role in the initiator identity of N-formylmethionyl-tRNA by promoting its recognition by IF2 and preventing the misappropriation of this tRNA by the elongation apparatus. In Bordetella bronchiseptica (strain ATCC BAA-588 / NCTC 13252 / RB50) (Alcaligenes bronchisepticus), this protein is Methionyl-tRNA formyltransferase.